Here is a 286-residue protein sequence, read N- to C-terminus: Flagellin FlaB1 (286 aa).

The interval 231–286 (LDIAAENLQAAESRIRDANIAKQMVEYTKNQVLTQSGTAMLAQANTSAQSILSILR) is required for interaction with FliW.

It belongs to the bacterial flagellin family. The flagellum consists of an outer layer composed of repeating units of FlaA around a core that contains several antigenically related polypeptides. Interacts via its C-terminus with FliW; a synthetic peptide of residues 229-247 partially blocks binding to FliW.

The protein resides in the periplasmic flagellum. Its subcellular location is the periplasm. Functionally, component of the core of the flagella. This chain is Flagellin FlaB1 (flaB1), found in Treponema pallidum (strain Nichols).